A 175-amino-acid chain; its full sequence is Peptide deformylase (175 aa).

Fe cation is bound by residues Cys-96 and His-138. The active site involves Glu-139. A Fe cation-binding site is contributed by His-142.

It belongs to the polypeptide deformylase family. Requires Fe(2+) as cofactor.

It carries out the reaction N-terminal N-formyl-L-methionyl-[peptide] + H2O = N-terminal L-methionyl-[peptide] + formate. Functionally, removes the formyl group from the N-terminal Met of newly synthesized proteins. Requires at least a dipeptide for an efficient rate of reaction. N-terminal L-methionine is a prerequisite for activity but the enzyme has broad specificity at other positions. This Rhodopseudomonas palustris (strain ATCC BAA-98 / CGA009) protein is Peptide deformylase.